Consider the following 446-residue polypeptide: Ribosomal protein uS12 methylthiotransferase RimO (446 aa).

The region spanning 4–119 is the MTTase N-terminal domain; it reads YKVGMVSLGC…IDKVIKEFIE (116 aa). [4Fe-4S] cluster is bound by residues Cys13, Cys48, Cys82, Cys157, Cys161, and Cys164. In terms of domain architecture, Radical SAM core spans 143-373; it reads TTQKESAYIR…MLSQEKISND (231 aa). In terms of domain architecture, TRAM spans 376–442; sequence KLKVNKKYDI…DYDLIGVVED (67 aa).

The protein belongs to the methylthiotransferase family. RimO subfamily. It depends on [4Fe-4S] cluster as a cofactor.

It is found in the cytoplasm. The catalysed reaction is L-aspartate(89)-[ribosomal protein uS12]-hydrogen + (sulfur carrier)-SH + AH2 + 2 S-adenosyl-L-methionine = 3-methylsulfanyl-L-aspartate(89)-[ribosomal protein uS12]-hydrogen + (sulfur carrier)-H + 5'-deoxyadenosine + L-methionine + A + S-adenosyl-L-homocysteine + 2 H(+). Its function is as follows. Catalyzes the methylthiolation of an aspartic acid residue of ribosomal protein uS12. The protein is Ribosomal protein uS12 methylthiotransferase RimO of Clostridium botulinum (strain Eklund 17B / Type B).